A 263-amino-acid chain; its full sequence is Proteasome subunit alpha type-1 (263 aa).

Met1 is subject to N-acetylmethionine. A Phosphoserine; alternate modification is found at Ser110. Ser110 carries an O-linked (GlcNAc) serine; alternate glycan. Lys115 participates in a covalent cross-link: Glycyl lysine isopeptide (Lys-Gly) (interchain with G-Cter in ubiquitin). Phosphoserine is present on Ser177. Lys208 participates in a covalent cross-link: Glycyl lysine isopeptide (Lys-Gly) (interchain with G-Cter in ubiquitin). Residues 232–263 (FLEGLEERPQRKAQPTQPADEPAEKADEPMEH) form a disordered region. Over residues 253-263 (PAEKADEPMEH) the composition is skewed to basic and acidic residues.

This sequence belongs to the peptidase T1A family. In terms of assembly, the 26S proteasome consists of a 20S proteasome core and two 19S regulatory subunits. The 20S proteasome core is a barrel-shaped complex made of 28 subunits that are arranged in four stacked rings. The two outer rings are each formed by seven alpha subunits, and the two inner rings are formed by seven beta subunits. The proteolytic activity is exerted by three beta-subunits PSMB5, PSMB6 and PSMB7. Interacts with NOTCH3. Interacts with ZFAND1.

Its subcellular location is the cytoplasm. It localises to the nucleus. Its function is as follows. Component of the 20S core proteasome complex involved in the proteolytic degradation of most intracellular proteins. This complex plays numerous essential roles within the cell by associating with different regulatory particles. Associated with two 19S regulatory particles, forms the 26S proteasome and thus participates in the ATP-dependent degradation of ubiquitinated proteins. The 26S proteasome plays a key role in the maintenance of protein homeostasis by removing misfolded or damaged proteins that could impair cellular functions, and by removing proteins whose functions are no longer required. Associated with the PA200 or PA28, the 20S proteasome mediates ubiquitin-independent protein degradation. This type of proteolysis is required in several pathways including spermatogenesis (20S-PA200 complex) or generation of a subset of MHC class I-presented antigenic peptides (20S-PA28 complex). The sequence is that of Proteasome subunit alpha type-1 (PSMA1) from Bos taurus (Bovine).